The chain runs to 198 residues: Fe/S biogenesis protein NfuA (198 aa).

Residues C155 and C158 each coordinate [4Fe-4S] cluster.

The protein belongs to the NfuA family. As to quaternary structure, homodimer. Requires [4Fe-4S] cluster as cofactor.

Its function is as follows. Involved in iron-sulfur cluster biogenesis. Binds a 4Fe-4S cluster, can transfer this cluster to apoproteins, and thereby intervenes in the maturation of Fe/S proteins. Could also act as a scaffold/chaperone for damaged Fe/S proteins. The polypeptide is Fe/S biogenesis protein NfuA (Haemophilus influenzae (strain 86-028NP)).